The sequence spans 107 residues: U1-lycotoxin-Ls1b (107 aa).

The signal sequence occupies residues 1–20 (MMKALVVVALLVTLISYSSS). A propeptide spanning residues 21–41 (EGIDDLEADELLSLMANEQTR) is cleaved from the precursor. Disulfide bonds link Cys-44–Cys-59, Cys-51–Cys-68, Cys-58–Cys-86, and Cys-70–Cys-84.

This sequence belongs to the neurotoxin 19 (CSTX) family. 04 (U1-Lctx) subfamily. Expressed by the venom gland.

It is found in the secreted. The sequence is that of U1-lycotoxin-Ls1b from Lycosa singoriensis (Wolf spider).